The chain runs to 795 residues: Lon protease (795 aa).

The Lon N-terminal domain occupies 7-213 (PQILVVRNQV…KIIGSGIEDL (207 aa)). 379–386 (GPPGVGKS) provides a ligand contact to ATP. Residues 615-795 (DALPGIVNGM…YKDIYNKIFN (181 aa)) enclose the Lon proteolytic domain. Active-site residues include Ser-702 and Lys-745.

This sequence belongs to the peptidase S16 family. As to quaternary structure, homohexamer. Organized in a ring with a central cavity.

The protein resides in the cytoplasm. The enzyme catalyses Hydrolysis of proteins in presence of ATP.. Functionally, ATP-dependent serine protease that mediates the selective degradation of mutant and abnormal proteins as well as certain short-lived regulatory proteins. Required for cellular homeostasis and for survival from DNA damage and developmental changes induced by stress. Degrades polypeptides processively to yield small peptide fragments that are 5 to 10 amino acids long. Binds to DNA in a double-stranded, site-specific manner. In Mycoplasma pneumoniae (strain ATCC 29342 / M129 / Subtype 1) (Mycoplasmoides pneumoniae), this protein is Lon protease.